The primary structure comprises 390 residues: Chorismate synthase 1 (390 aa).

Positions 39 and 45 each coordinate NADP(+). Residues 132 to 134 (RSS), 253 to 254 (NA), Gly-298, 313 to 317 (KPIPT), and Arg-339 contribute to the FMN site.

It belongs to the chorismate synthase family. As to quaternary structure, homotetramer. Requires FMNH2 as cofactor.

The catalysed reaction is 5-O-(1-carboxyvinyl)-3-phosphoshikimate = chorismate + phosphate. Its pathway is metabolic intermediate biosynthesis; chorismate biosynthesis; chorismate from D-erythrose 4-phosphate and phosphoenolpyruvate: step 7/7. Its function is as follows. Catalyzes the anti-1,4-elimination of the C-3 phosphate and the C-6 proR hydrogen from 5-enolpyruvylshikimate-3-phosphate (EPSP) to yield chorismate, which is the branch point compound that serves as the starting substrate for the three terminal pathways of aromatic amino acid biosynthesis. This reaction introduces a second double bond into the aromatic ring system. The protein is Chorismate synthase 1 of Bacillus anthracis.